The following is a 239-amino-acid chain: Probable transcriptional regulatory protein RBAM_007230 (239 aa).

This sequence belongs to the TACO1 family. YeeN subfamily.

The protein localises to the cytoplasm. This is Probable transcriptional regulatory protein RBAM_007230 from Bacillus velezensis (strain DSM 23117 / BGSC 10A6 / LMG 26770 / FZB42) (Bacillus amyloliquefaciens subsp. plantarum).